The chain runs to 396 residues: 1-deoxy-D-xylulose 5-phosphate reductoisomerase (396 aa).

Thr13, Gly14, Ser15, Ile16, and Asn127 together coordinate NADPH. Lys128 is a binding site for 1-deoxy-D-xylulose 5-phosphate. Glu129 contributes to the NADPH binding site. Asp153 contacts Mn(2+). The 1-deoxy-D-xylulose 5-phosphate site is built by Ser154, Glu155, Ser184, and His207. Glu155 contacts Mn(2+). Gly213 lines the NADPH pocket. The 1-deoxy-D-xylulose 5-phosphate site is built by Ser220, Asn225, Lys226, and Glu229. Glu229 is a Mn(2+) binding site.

It belongs to the DXR family. Requires Mg(2+) as cofactor. The cofactor is Mn(2+).

The enzyme catalyses 2-C-methyl-D-erythritol 4-phosphate + NADP(+) = 1-deoxy-D-xylulose 5-phosphate + NADPH + H(+). It functions in the pathway isoprenoid biosynthesis; isopentenyl diphosphate biosynthesis via DXP pathway; isopentenyl diphosphate from 1-deoxy-D-xylulose 5-phosphate: step 1/6. Its function is as follows. Catalyzes the NADPH-dependent rearrangement and reduction of 1-deoxy-D-xylulose-5-phosphate (DXP) to 2-C-methyl-D-erythritol 4-phosphate (MEP). This chain is 1-deoxy-D-xylulose 5-phosphate reductoisomerase, found in Pseudomonas paraeruginosa (strain DSM 24068 / PA7) (Pseudomonas aeruginosa (strain PA7)).